We begin with the raw amino-acid sequence, 317 residues long: Protoheme IX farnesyltransferase (317 aa).

A run of 9 helical transmembrane segments spans residues 43–63 (PISV…AGAT), 65–85 (PVSG…CAGA), 119–139 (ALYW…NLNP), 140–160 (IAWI…SLWL), 168–188 (IVIG…AVTG), 195–215 (VLIA…LAIF), 238–258 (LNWL…IYFV), 261–281 (WGLV…ALSV), and 292–312 (AWVL…SMMV).

The protein belongs to the UbiA prenyltransferase family. Protoheme IX farnesyltransferase subfamily. In terms of assembly, interacts with CtaA.

The protein resides in the cell membrane. It catalyses the reaction heme b + (2E,6E)-farnesyl diphosphate + H2O = Fe(II)-heme o + diphosphate. The protein operates within porphyrin-containing compound metabolism; heme O biosynthesis; heme O from protoheme: step 1/1. Its function is as follows. Converts heme B (protoheme IX) to heme O by substitution of the vinyl group on carbon 2 of heme B porphyrin ring with a hydroxyethyl farnesyl side group. The chain is Protoheme IX farnesyltransferase from Desulforudis audaxviator (strain MP104C).